Reading from the N-terminus, the 509-residue chain is ATP synthase subunit alpha (509 aa).

Glycine 169–threonine 176 serves as a coordination point for ATP.

It belongs to the ATPase alpha/beta chains family. F-type ATPases have 2 components, CF(1) - the catalytic core - and CF(0) - the membrane proton channel. CF(1) has five subunits: alpha(3), beta(3), gamma(1), delta(1), epsilon(1). CF(0) has four main subunits: a(1), b(1), b'(1) and c(9-12).

The protein localises to the cell inner membrane. The catalysed reaction is ATP + H2O + 4 H(+)(in) = ADP + phosphate + 5 H(+)(out). Produces ATP from ADP in the presence of a proton gradient across the membrane. The alpha chain is a regulatory subunit. In Bradyrhizobium sp. (strain ORS 278), this protein is ATP synthase subunit alpha.